We begin with the raw amino-acid sequence, 632 residues long: Dihydrolipoyllysine-residue acetyltransferase component of pyruvate dehydrogenase complex, mitochondrial (632 aa).

A mitochondrion-targeting transit peptide spans 1-77; sequence MWRVCARRVQ…LLGSPSRRSY (77 aa). Lipoyl-binding domains follow at residues 82–158 and 208–284; these read HQKV…CITV and HMQI…CIIV. Ser-91 carries the phosphoserine modification. Residues Lys-123 and Lys-249 each carry the N6-lipoyllysine modification. One can recognise a Peripheral subunit-binding (PSBD) domain in the interval 342 to 379; it reads FVSPLAKKLAAEKGIDLTQVKGTGPEGRIIKKDIDSFV. Arg-446 provides a ligand contact to CoA. At Lys-451 the chain carries N6-acetyllysine. An N6-succinyllysine modification is found at Lys-458. Ser-460 contributes to the CoA binding site. Residue Lys-532 is modified to N6-succinyllysine. CoA-binding residues include Ser-551, Asn-552, and Gly-576. Active-site residues include His-605 and Asp-609.

The protein belongs to the 2-oxoacid dehydrogenase family. As to quaternary structure, part of the pyruvate dehydrogenase complex (PDHc) that is a multi-enzyme complex composed of multiple copies of three enzymes, pyruvate dehydrogenase (subunits PDH1A and PDHB, E1 component), dihydrolipoamide acetyltransferase (DLAT, E2 component), and dihydrolipoamide dehydrogenase (DLD, E3 component) to which is added an additional protein the E3-binding protein (PDHX, E3BP). In terms of structural architecture, the E2 and E3BP components assemble into a 60meric central core with icosahedral symmetry. The central core is decorated with E1 and E3 proteins. Currently, two alternative models for the E2:E3BP stoichiometry are considered as being either 48:12 (E2(48)-E3BP(12)) or 40:20 (E2(40)-E3BP(20)). Interacts with PDK2 and PDK3. Interacts with SIRT4. Interacts with PDHB. The cofactor is (R)-lipoate. In terms of processing, delipoylated at Lys-123 and Lys-249 by SIRT4, delipoylation decreases the PHD complex activity. In terms of tissue distribution, expressed in flagella of epididymal sperm.

It localises to the mitochondrion matrix. It catalyses the reaction N(6)-[(R)-dihydrolipoyl]-L-lysyl-[protein] + acetyl-CoA = N(6)-[(R)-S(8)-acetyldihydrolipoyl]-L-lysyl-[protein] + CoA. As part of the pyruvate dehydrogenase complex, catalyzes the transfers of an acetyl group to a lipoic acid moiety. The pyruvate dehydrogenase complex, catalyzes the overall conversion of pyruvate to acetyl-CoA and CO(2), and thereby links cytoplasmic glycolysis and the mitochondrial tricarboxylic acid (TCA) cycle. The chain is Dihydrolipoyllysine-residue acetyltransferase component of pyruvate dehydrogenase complex, mitochondrial from Rattus norvegicus (Rat).